The sequence spans 118 residues: Putative cytochrome P450 family member 4F30 (118 aa).

The tract at residues 1-64 (MVTPAGCLGG…GPLHILGTDG (64 aa)) is disordered. Residues 28 to 43 (RAGQTGQAVSGAQVSS) are compositionally biased toward polar residues.

The protein is Putative cytochrome P450 family member 4F30 (CYP4F30P) of Homo sapiens (Human).